A 1133-amino-acid polypeptide reads, in one-letter code: Protein cordon-bleu (1133 aa).

A compositionally biased stretch (pro residues) spans 1-11 (MKARAPPPPGK). Positions 1–25 (MKARAPPPPGKPAAQNVHSEQKLPH) are disordered. Phosphoserine is present on residues S31, S34, S196, S219, S256, and S278. Disordered regions lie at residues 246–393 (AEHL…SVNG) and 442–568 (QGGI…GQAS). Polar residues predominate over residues 272–301 (CVTTPNSPSLHSRSLTLGPSLSLGNISGMS). Positions 307 to 312 (KKRRAP) match the KKRRAP 1 motif. S330 and S333 each carry phosphoserine. Residues 340-345 (KKRRAP) carry the KKRRAP 2 motif. Residues 345 to 358 (PAPPPPQPPPPSPV) are compositionally biased toward pro residues. S356 carries the post-translational modification Phosphoserine. Residues 361 to 371 (NRKEDKEENRK) are compositionally biased toward basic and acidic residues. 2 stretches are compositionally biased toward polar residues: residues 382–393 (TDTSSLTSSVNG) and 442–464 (QGGIASQRSHLPPYQTEQSQPFI). A Phosphoserine modification is found at S447. The span at 512-524 (STDDPKAKDKDKM) shows a compositional bias: basic and acidic residues. S614 is subject to Phosphoserine. The tract at residues 664-720 (APSTTITATSEKPQRDETKAGFTLTTPEQQPASQEYGAPPEEDRSRPHSAVSCPVKV) is disordered. Polar residues-rich tracts occupy residues 665 to 674 (PSTTITATSE) and 686 to 696 (TLTTPEQQPAS). Residue S924 is modified to Phosphoserine. Disordered regions lie at residues 942-961 (PSPLSADGQNSDDALPSSIF) and 990-1018 (HTSGGRDKLRKTAEQASEGRPKKPSYVEA). 2 WH2 domains span residues 981-1001 (LHSALMEAIHTSGGRDKLRKT) and 1021-1041 (ERSALLAAIRGHSGTLSLRKV). Residues 993–1010 (GGRDKLRKTAEQASEGRP) show a composition bias toward basic and acidic residues. Positions 1063 to 1091 (DKPQQEDRGLPPPPALPPPSTPASQVPSA) are disordered. Residues 1072–1083 (LPPPPALPPPST) are compositionally biased toward pro residues. S1099 carries the phosphoserine modification. The 21-residue stretch at 1109–1129 (ARQALMDAIRSGTGAARLRKV) folds into the WH2 3 domain.

As to quaternary structure, identified in a complex composed of ACTA1, COBL, GSN AND TMSB4X. Identified in a complex composed of COBL, PACSIN1 and WASL. Interacts with PACSIN1, PACSIN2 and PACSIN3. Interacts (via WH2 domains) with actin monomers. Interacts with both PACSIN1 and DBNL. Detected in brain (at protein level).

Its subcellular location is the cell membrane. It localises to the cytoplasm. It is found in the cytoskeleton. The protein resides in the cell projection. The protein localises to the ruffle. Its subcellular location is the cytosol. Functionally, plays an important role in the reorganization of the actin cytoskeleton. Binds to and sequesters actin monomers (G actin). Nucleates actin polymerization by assembling three actin monomers in cross-filament orientation and thereby promotes growth of actin filaments at the barbed end. Can also mediate actin depolymerization at barbed ends and severing of actin filaments. Promotes formation of cell ruffles. Regulates dendrite branching in Purkinje cells. Regulates neuron morphogenesis and increases branching of axons and dendrites. This Rattus norvegicus (Rat) protein is Protein cordon-bleu (Cobl).